Consider the following 433-residue polypeptide: Steroid hormone receptor ERR2 (433 aa).

Residues 1–38 (MSSDDRHLGSSCGSFIKTEPSSPSSGIDALSHHSPSGS) are disordered. Residues 28 to 38 (DALSHHSPSGS) are compositionally biased toward low complexity. The segment at 93–211 (YMLNAIPKRL…SPPAKKPLTK (119 aa)) is interaction with NANOG. A DNA-binding region (nuclear receptor) is located at residues 100-186 (KRLCLVCGDI…RVRGGRQKYK (87 aa)). 2 NR C4-type zinc fingers span residues 103–123 (CLVC…CEAC) and 139–163 (CPAT…FMKC). The essential for ESRRB transcriptional activity and interaction with NCOA3 stretch occupies residues 203–433 (PPAKKPLTKI…LFLEMLEAKV (231 aa)). Residues 208 to 432 (PLTKIVSYLL…KLFLEMLEAK (225 aa)) enclose the NR LBD domain.

It belongs to the nuclear hormone receptor family. NR3 subfamily. As to quaternary structure, binds DNA as a monomer. Interacts with NR0B1; represses ESRRB activity at the GATA6 promoter. Interacts with NANOG; reciprocally modulates their transcriptional activities and activates POU5F1 expression. Interacts with NCOA3; mediates the interaction between ESRRB and RNA polymerase II complexes and allows NCOA3 corecruitment to ESRRB, KLF4, NANOG, and SOX2 enhancer regions to trigger ESRRB-dependent gene activation involved in self-renewal and pluripotency. Interacts with KDM1A; co-occupes the core set of ESRRB targets including ELF5 and EOMES. Interacts with the multiprotein complex Integrator, at least composed of INTS1, INTS2, INTS3, INTS4, INTS5, INTS6, INTS7, INTS8, INTS9/RC74, INTS10, INTS11/CPSF3L and INTS12; ESRRB is probably not a core component of the integrator complex and associates to integrator via its interaction with INTS1 and INTS9; attracts the transcriptional machinery. Interacts with JARID2. Interacts with POU5F1; recruits ESRRB near the POU5F1-SOX2 element in the NANOG proximal promoter leading to activation of NANOG expression; the interaction is DNA independent. Interacts with NFE2L2; represses NFE2L2 transcriptional activity. Isoform 1 interacts with ESR1. Acetylated by PCAF/KAT2 (in vitro).

It is found in the nucleus. The protein localises to the cytoplasm. It localises to the chromosome. Functionally, transcription factor that binds a canonical ESRRB recognition (ERRE) sequence 5'TCAAGGTCA-3' localized on promoter and enhancer of targets genes regulating their expression or their transcription activity. Plays a role, in a LIF-independent manner, in maintainance of self-renewal and pluripotency of embryonic and trophoblast stem cells through different signaling pathways including FGF signaling pathway and Wnt signaling pathways. Involved in morula development (2-16 cells embryos) by acting as a regulator at the 8-cell stage. Upon FGF signaling pathway activation, interacts with KDM1A by directly binding to enhancer site of ELF5 and EOMES and activating their transcription leading to self-renewal of trophoblast stem cells. Also regulates expression of multiple rod-specific genes and is required for survival of this cell type. Plays a role as transcription factor activator of GATA6, NR0B1, POU5F1 and PERM1. Plays a role as transcription factor repressor of NFE2L2 transcriptional activity and ESR1 transcriptional activity. During mitosis remains bound to a subset of interphase target genes, including pluripotency regulators, through the canonical ESRRB recognition (ERRE) sequence, leading to their transcriptional activation in early G1 phase. Can coassemble on structured DNA elements with other transcription factors like SOX2, POU5F1, KDM1A and NCOA3 to trigger ESRRB-dependent gene activation. This mechanism, in the case of SOX2 corecruitment prevents the embryonic stem cells (ESCs) to epiblast stem cells (EpiSC) transition through positive regulation of NR0B1 that inhibits the EpiSC transcriptional program. Also plays a role inner ear development by controlling expression of ion channels and transporters and in early placentation. Its function is as follows. Transcription factor that binds a canonical ESRRB recognition (ERRE) sequence 5'TCAAGGTCA-3' localized on promoter and enhancer of targets genes regulating their expression or their transcription activity. Positively regulates ESR1 transcriptional activity upon E2 stimulation. This chain is Steroid hormone receptor ERR2, found in Homo sapiens (Human).